A 1108-amino-acid chain; its full sequence is Mediator of RNA polymerase II transcription subunit 14 (1108 aa).

Disordered regions lie at residues 1-30 (MAAV…GGDT), 35-54 (SSEI…DNPL), and 1048-1108 (QQQR…VDLT). Over residues 35 to 52 (SSEIVQQQTPARSLQSDN) the composition is skewed to polar residues. The span at 1048-1080 (QQQRQPVVQPGQQPQVQNQANGVMNRGPQRPGL) shows a compositional bias: low complexity.

This sequence belongs to the Mediator complex subunit 14 family. Component of the Mediator complex.

The protein localises to the nucleus. Its function is as follows. Component of the Mediator complex, a coactivator involved in the regulated transcription of nearly all RNA polymerase II-dependent genes. Mediator functions as a bridge to convey information from gene-specific regulatory proteins to the basal RNA polymerase II transcription machinery. Mediator is recruited to promoters by direct interactions with regulatory proteins and serves as a scaffold for the assembly of a functional preinitiation complex with RNA polymerase II and the general transcription factors. The protein is Mediator of RNA polymerase II transcription subunit 14 (RGR1) of Pyricularia oryzae (strain 70-15 / ATCC MYA-4617 / FGSC 8958) (Rice blast fungus).